Reading from the N-terminus, the 750-residue chain is Putative tyrosine-protein kinase EpsB (750 aa).

Residues 1–31 (MTQNLPQPPAVNAPENELDLVRYLDVLVANR) are Cytoplasmic-facing. The chain crosses the membrane as a helical span at residues 32 to 52 (WLIAGIAAAVMLLGAAYAFLA). At 53 to 444 (RPVYEADIMV…VPEEPVKPKK (392 aa)) the chain is on the periplasmic side. A helical transmembrane segment spans residues 445–465 (LTVTPLAGVLGVVLGVMAAFV). Topologically, residues 466 to 750 (RNALFGGITD…NSKPPEAESA (285 aa)) are cytoplasmic.

The protein belongs to the etk/wzc family.

The protein localises to the cell inner membrane. The catalysed reaction is L-tyrosyl-[protein] + ATP = O-phospho-L-tyrosyl-[protein] + ADP + H(+). In terms of biological role, probably involved in polymerization and/or export of exopolysaccharide EPS I which functions as a virulence factor. May be involved in an ATP-dependent process in the pathway for EPS I production, possibly export of the trimeric repeat units across the inner membrane or their polymerization. This chain is Putative tyrosine-protein kinase EpsB (epsB), found in Ralstonia solanacearum (Pseudomonas solanacearum).